The sequence spans 211 residues: 3-demethoxyubiquinol 3-hydroxylase (211 aa).

Fe cation contacts are provided by Glu-60, Glu-90, His-93, Glu-142, Glu-174, and His-177.

It belongs to the COQ7 family. Fe cation serves as cofactor.

It localises to the cell membrane. It catalyses the reaction a 5-methoxy-2-methyl-3-(all-trans-polyprenyl)benzene-1,4-diol + AH2 + O2 = a 3-demethylubiquinol + A + H2O. The protein operates within cofactor biosynthesis; ubiquinone biosynthesis. Functionally, catalyzes the hydroxylation of 2-nonaprenyl-3-methyl-6-methoxy-1,4-benzoquinol during ubiquinone biosynthesis. The polypeptide is 3-demethoxyubiquinol 3-hydroxylase (Francisella tularensis subsp. holarctica (strain FTNF002-00 / FTA)).